The chain runs to 116 residues: Large ribosomal subunit protein bL17 (116 aa).

It belongs to the bacterial ribosomal protein bL17 family. Part of the 50S ribosomal subunit. Contacts protein L32.

This chain is Large ribosomal subunit protein bL17, found in Helicobacter hepaticus (strain ATCC 51449 / 3B1).